The chain runs to 270 residues: Acetylglutamate kinase (270 aa).

Residues 53 to 54 (GG), R75, and N167 each bind substrate.

Belongs to the acetylglutamate kinase family. ArgB subfamily.

The protein resides in the cytoplasm. The catalysed reaction is N-acetyl-L-glutamate + ATP = N-acetyl-L-glutamyl 5-phosphate + ADP. Its pathway is amino-acid biosynthesis; L-arginine biosynthesis; N(2)-acetyl-L-ornithine from L-glutamate: step 2/4. Catalyzes the ATP-dependent phosphorylation of N-acetyl-L-glutamate. The protein is Acetylglutamate kinase of Shewanella halifaxensis (strain HAW-EB4).